Consider the following 352-residue polypeptide: tRNA pseudouridine synthase D (352 aa).

The Nucleophile role is filled by aspartate 78. In terms of domain architecture, TRUD spans 153–299; sequence GVPNYYGEQR…LDQDRRPLLL (147 aa).

Belongs to the pseudouridine synthase TruD family.

The catalysed reaction is uridine(13) in tRNA = pseudouridine(13) in tRNA. In terms of biological role, responsible for synthesis of pseudouridine from uracil-13 in transfer RNAs. The polypeptide is tRNA pseudouridine synthase D (Aeromonas hydrophila subsp. hydrophila (strain ATCC 7966 / DSM 30187 / BCRC 13018 / CCUG 14551 / JCM 1027 / KCTC 2358 / NCIMB 9240 / NCTC 8049)).